Reading from the N-terminus, the 947-residue chain is Bifunctional glutamine synthetase adenylyltransferase/adenylyl-removing enzyme (947 aa).

An adenylyl removase region spans residues 1-440 (MTPLSSPLRQ…VFNELIGDDE (440 aa)). The interval 450-947 (SEPWREVWQD…ASWRKWLVAV (498 aa)) is adenylyl transferase.

The protein belongs to the GlnE family. Mg(2+) is required as a cofactor.

It carries out the reaction [glutamine synthetase]-O(4)-(5'-adenylyl)-L-tyrosine + phosphate = [glutamine synthetase]-L-tyrosine + ADP. The enzyme catalyses [glutamine synthetase]-L-tyrosine + ATP = [glutamine synthetase]-O(4)-(5'-adenylyl)-L-tyrosine + diphosphate. In terms of biological role, involved in the regulation of glutamine synthetase GlnA, a key enzyme in the process to assimilate ammonia. When cellular nitrogen levels are high, the C-terminal adenylyl transferase (AT) inactivates GlnA by covalent transfer of an adenylyl group from ATP to specific tyrosine residue of GlnA, thus reducing its activity. Conversely, when nitrogen levels are low, the N-terminal adenylyl removase (AR) activates GlnA by removing the adenylyl group by phosphorolysis, increasing its activity. The regulatory region of GlnE binds the signal transduction protein PII (GlnB) which indicates the nitrogen status of the cell. This Salmonella arizonae (strain ATCC BAA-731 / CDC346-86 / RSK2980) protein is Bifunctional glutamine synthetase adenylyltransferase/adenylyl-removing enzyme.